The chain runs to 515 residues: Protein disulfide-isomerase (515 aa).

Positions 1-20 (MRTFAPWILSLLGASAVASA) are cleaved as a signal peptide. Thioredoxin domains follow at residues 21 to 136 (ADAT…QSLP) and 343 to 470 (VLDD…ENGK). Residues cysteine 58, cysteine 61, cysteine 393, and cysteine 396 each act as nucleophile in the active site. 2 cysteine pairs are disulfide-bonded: cysteine 58–cysteine 61 and cysteine 393–cysteine 396. Composition is skewed to basic and acidic residues over residues 472–496 (KVDA…RAAS) and 506–515 (SDDKSEHDEL). Residues 472-515 (KVDALEVDPKKEQESGDATETRAASDETETPAATSDDKSEHDEL) are disordered. Residues 512 to 515 (HDEL) carry the Prevents secretion from ER motif.

This sequence belongs to the protein disulfide isomerase family.

It is found in the endoplasmic reticulum lumen. It catalyses the reaction Catalyzes the rearrangement of -S-S- bonds in proteins.. In terms of biological role, participates in the folding of proteins containing disulfide bonds, may be involved in glycosylation, prolyl hydroxylation and triglyceride transfer. The sequence is that of Protein disulfide-isomerase (pdiA) from Aspergillus oryzae (strain ATCC 42149 / RIB 40) (Yellow koji mold).